Reading from the N-terminus, the 89-residue chain is C-C motif chemokine 18 (89 aa).

Positions 1 to 20 are cleaved as a signal peptide; sequence MKGLAAALLVLVCTMALCSC. 2 disulfide bridges follow: Cys30–Cys54 and Cys31–Cys70.

This sequence belongs to the intercrine beta (chemokine CC) family. The Cys-30/Cys-54 disulfide bond is required for activity. Expressed at high levels in lung, lymph nodes, placenta, bone marrow, dendritic cells present in germinal centers and T-cell areas of secondary lymphoid organs and macrophages derived from peripheral blood monocytes. Not expressed by peripheral blood monocytes and a monocyte-to-macrophage differentiation is a prerequisite for expression. Expressed in synovial fluids from patients with rheumatoid and septic arthritis and in ovarian carcinoma ascitic fluid.

It is found in the secreted. In terms of biological role, chemotactic factor that attracts lymphocytes but not monocytes or granulocytes. May be involved in B-cell migration into B-cell follicles in lymph nodes. Attracts naive T-lymphocytes toward dendritic cells and activated macrophages in lymph nodes, has chemotactic activity for naive T-cells, CD4+ and CD8+ T-cells and thus may play a role in both humoral and cell-mediated immunity responses. The chain is C-C motif chemokine 18 (CCL18) from Homo sapiens (Human).